The sequence spans 594 residues: Adenine deaminase 1 (594 aa).

The protein belongs to the metallo-dependent hydrolases superfamily. Adenine deaminase family. Mn(2+) serves as cofactor.

The catalysed reaction is adenine + H2O + H(+) = hypoxanthine + NH4(+). This chain is Adenine deaminase 1, found in Latilactobacillus sakei subsp. sakei (strain 23K) (Lactobacillus sakei subsp. sakei).